The primary structure comprises 335 residues: N-acetyl-gamma-glutamyl-phosphate reductase (335 aa).

Cys156 is an active-site residue.

The protein belongs to the NAGSA dehydrogenase family. Type 1 subfamily.

It localises to the cytoplasm. The enzyme catalyses N-acetyl-L-glutamate 5-semialdehyde + phosphate + NADP(+) = N-acetyl-L-glutamyl 5-phosphate + NADPH + H(+). The protein operates within amino-acid biosynthesis; L-arginine biosynthesis; N(2)-acetyl-L-ornithine from L-glutamate: step 3/4. Its function is as follows. Catalyzes the NADPH-dependent reduction of N-acetyl-5-glutamyl phosphate to yield N-acetyl-L-glutamate 5-semialdehyde. The sequence is that of N-acetyl-gamma-glutamyl-phosphate reductase from Tolumonas auensis (strain DSM 9187 / NBRC 110442 / TA 4).